The chain runs to 423 residues: COP9 signalosome complex subunit 3 (423 aa).

Residue alanine 2 is modified to N-acetylalanine. The 169-residue stretch at 197–365 (NFERALYFYE…GMVSFHDNPE (169 aa)) folds into the PCI domain. Residues 402-423 (QFVQKSMGSQEDDSGNKPSSYS) are disordered. Phosphoserine occurs at positions 407, 410, and 423.

The protein belongs to the CSN3 family. In terms of assembly, component of the CSN complex, composed of COPS1/GPS1, COPS2, COPS3, COPS4, COPS5, COPS6, COPS7 (COPS7A or COPS7B), COPS8 and COPS9. In the complex, it probably interacts directly with COPS1, COPS4, COPS8 and COPS9. Interacts with CK2 and PKD. Interacts with the translation initiation factor EIF3S6 and IKBKG. Interacts with ERCC6.

The protein resides in the cytoplasm. The protein localises to the nucleus. Functionally, component of the COP9 signalosome complex (CSN), a complex involved in various cellular and developmental processes. The CSN complex is an essential regulator of the ubiquitin (Ubl) conjugation pathway by mediating the deneddylation of the cullin subunits of SCF-type E3 ligase complexes, leading to decrease the Ubl ligase activity of SCF-type complexes such as SCF, CSA or DDB2. The complex is also involved in phosphorylation of p53/TP53, c-jun/JUN, IkappaBalpha/NFKBIA, ITPK1 and IRF8/ICSBP, possibly via its association with CK2 and PKD kinases. CSN-dependent phosphorylation of TP53 and JUN promotes and protects degradation by the Ubl system, respectively. Essential to maintain the survival of epiblast cells and thus the development of the postimplantation embryo. The chain is COP9 signalosome complex subunit 3 (Cops3) from Rattus norvegicus (Rat).